Consider the following 266-residue polypeptide: Type II iodothyronine deiodinase (266 aa).

Residues 1-9 (MGLLSVDLL) are Lumenal-facing. The chain crosses the membrane as a helical; Signal-anchor for type III membrane protein span at residues 10 to 34 (ITLQILPVFFSNCLFLALYDSVILL). Residues 35–266 (KHVALLLSRS…KNFSKRUILD (232 aa)) lie on the Cytoplasmic side of the membrane. Sec130 is an active-site residue. Residues Sec130 and Sec263 are each a non-standard amino acid (selenocysteine).

It belongs to the iodothyronine deiodinase family. In terms of assembly, predominantly monomer. Can form homodimers but homodimerization is not essential for enzyme activity. Interacts with USP20 and USP33. Interacts with MARCHF6. Ubiquitinated by MARCHF6, leading to its degradation by the proteasome. Deubiquitinated by USP20 and USP33. As to expression, expressed in cerebral cortex, cerebellum, pituitary gland, mostly in anterior pituitary gland, and pineal gland, as well as in brown adipose tissue (BAT).

The protein resides in the endoplasmic reticulum membrane. It catalyses the reaction 3,3',5-triiodo-L-thyronine + iodide + A + H(+) = L-thyroxine + AH2. It carries out the reaction 3,3'-diiodo-L-thyronine + iodide + A + H(+) = 3,3',5'-triiodo-L-thyronine + AH2. The catalysed reaction is 3'-iodo-L-thyronine + iodide + A + H(+) = 3',5'-diiodo-L-thyronine + AH2. The enzyme catalyses 3,3'-diiodothyronamine + iodide + A + H(+) = 3,3',5'-triiodothyronamine + AH2. It catalyses the reaction 3'-iodothyronamine + iodide + A + H(+) = 3',5'-diiodothyronamine + AH2. Its function is as follows. Plays a crucial role in the metabolism of thyroid hormones (TH) and has specific roles in TH activation and inactivation by deiodination. Catalyzes the deiodination of L-thyroxine (T4) to 3,5,3'-triiodothyronine (T3) and 3',5'-diiodothyronine (3',5'-T2) to 3'-monoiodothyronine (3'-T1) via outer-ring deiodination (ORD). Catalyzes the deiodination of 3,3',5'-triiodothyronine (rT3) to 3,3'-diiodothyronine (3,3'-T2) via ORD. Catalyzes the phenolic ring deiodinations of 3,3',5'-triiodothyronamine and 3',5'- diiodothyronamine. This Rattus norvegicus (Rat) protein is Type II iodothyronine deiodinase (Dio2).